The chain runs to 67 residues: Large ribosomal subunit protein uL29 (67 aa).

It belongs to the universal ribosomal protein uL29 family.

In Polaromonas naphthalenivorans (strain CJ2), this protein is Large ribosomal subunit protein uL29.